Consider the following 115-residue polypeptide: Putative membrane protein insertion efficiency factor (115 aa).

The protein belongs to the UPF0161 family.

The protein localises to the cell membrane. Functionally, could be involved in insertion of integral membrane proteins into the membrane. In Mycobacterium avium (strain 104), this protein is Putative membrane protein insertion efficiency factor.